An 87-amino-acid chain; its full sequence is Glutaredoxin (87 aa).

Residues 1-87 (MFVVIFGRPG…LMKEQFGIVA (87 aa)) enclose the Glutaredoxin domain. The cysteines at positions 11 and 14 are disulfide-linked.

The protein belongs to the glutaredoxin family. As to quaternary structure, monomer.

The protein localises to the cytoplasm. In terms of biological role, has a glutathione-disulfide oxidoreductase activity in the presence of NADPH and glutathione reductase. Reduces low molecular weight disulfides and proteins. This Haemophilus influenzae (strain ATCC 51907 / DSM 11121 / KW20 / Rd) protein is Glutaredoxin (grxA).